The chain runs to 223 residues: NLP effector protein 3 (223 aa).

Residues 90–100 (AIMYVWYFPKD) carry the Conserved undecapeptide motif motif. The Conserved heptapeptide motif motif lies at 107–113 (GHRHDWE).

The protein belongs to the Necrosis inducing protein (NPP1) family.

It is found in the secreted. The protein localises to the host cytoplasm. In terms of biological role, probable secreted effector that may act as a pathogen-associated molecular pattern (PAMP) recognized by the plant immune system. Seems not to induce necrosis, neither in several susceptible or resistant Vitis species nor in the dicot model plant Nicotiana benthamiana. This is NLP effector protein 3 from Plasmopara viticola (Downy mildew of grapevine).